Here is a 185-residue protein sequence, read N- to C-terminus: Photosystem I assembly protein Ycf4 (185 aa).

The next 2 helical transmembrane spans lie at 20–40 (GNFF…SVGA) and 57–77 (ILFF…LFIS).

Belongs to the Ycf4 family.

The protein localises to the plastid. The protein resides in the chloroplast thylakoid membrane. Seems to be required for the assembly of the photosystem I complex. This Lolium perenne (Perennial ryegrass) protein is Photosystem I assembly protein Ycf4.